The chain runs to 75 residues: UPF0512 protein C (75 aa).

The protein belongs to the UPF0512 family.

This Dictyostelium discoideum (Social amoeba) protein is UPF0512 protein C.